The sequence spans 351 residues: 7,8-didemethyl-8-hydroxy-5-deazariboflavin synthase (351 aa).

One can recognise a Radical SAM core domain in the interval Ile-35–Asn-275. [4Fe-4S] cluster contacts are provided by Cys-49, Cys-53, and Cys-56.

This sequence belongs to the radical SAM superfamily. CofG family. As to quaternary structure, consists of two subunits, CofG and CofH. The cofactor is [4Fe-4S] cluster.

The catalysed reaction is 5-amino-5-(4-hydroxybenzyl)-6-(D-ribitylimino)-5,6-dihydrouracil + S-adenosyl-L-methionine = 7,8-didemethyl-8-hydroxy-5-deazariboflavin + 5'-deoxyadenosine + L-methionine + NH4(+) + H(+). The protein operates within cofactor biosynthesis; coenzyme F0 biosynthesis. Catalyzes the radical-mediated synthesis of 7,8-didemethyl-8-hydroxy-5-deazariboflavin from 5-amino-5-(4-hydroxybenzyl)-6-(D-ribitylimino)-5,6-dihydrouracil. The polypeptide is 7,8-didemethyl-8-hydroxy-5-deazariboflavin synthase (Methanococcus vannielii (strain ATCC 35089 / DSM 1224 / JCM 13029 / OCM 148 / SB)).